The primary structure comprises 101 residues: Early E3A 11.6 kDa glycoprotein (101 aa).

Asparagine 14 is a glycosylation site (N-linked (GlcNAc...) asparagine; by host). The helical transmembrane segment at 41–62 (MWWFSIALMFVCLIIMWLICCL) threads the bilayer.

The protein belongs to the adenoviridae E3A-1 family. N-glycosylated and probably also O-glycosylated.

Its subcellular location is the host nucleus membrane. The sequence is that of Early E3A 11.6 kDa glycoprotein from Human adenovirus C serotype 6 (HAdV-6).